We begin with the raw amino-acid sequence, 209 residues long: Kinetochore protein Spc25 (209 aa).

Residues 74-107 (TRAVREKLAEERQKNAEMQAQLEKANDERIEQMD) adopt a coiled-coil conformation.

The protein belongs to the SPC25 family. Component of the Ndc80 complex, which is composed of Ndc80, Nuf2 and Spc25.

It localises to the nucleus. Its subcellular location is the chromosome. The protein localises to the centromere. The protein resides in the kinetochore. Functionally, acts as a component of the essential kinetochore-associated Ndc80 complex, which is required for chromosome segregation and spindle checkpoint activity during meiosis and mitosis. Required for kinetochore integrity and the organization of stable microtubule binding sites in the outer plate of the kinetochore. Participates in SAC signaling that responds specifically to disruptions in spindle microtubule dynamics. The NDC80 complex synergistically enhances the affinity of the SKA1 complex for microtubules and may allow the NDC80 complex to track depolymerizing microtubules. The polypeptide is Kinetochore protein Spc25 (Drosophila grimshawi (Hawaiian fruit fly)).